A 371-amino-acid polypeptide reads, in one-letter code: Aminomethyltransferase (371 aa).

The protein belongs to the GcvT family. In terms of assembly, the glycine cleavage system is composed of four proteins: P, T, L and H.

The enzyme catalyses N(6)-[(R)-S(8)-aminomethyldihydrolipoyl]-L-lysyl-[protein] + (6S)-5,6,7,8-tetrahydrofolate = N(6)-[(R)-dihydrolipoyl]-L-lysyl-[protein] + (6R)-5,10-methylene-5,6,7,8-tetrahydrofolate + NH4(+). In terms of biological role, the glycine cleavage system catalyzes the degradation of glycine. The sequence is that of Aminomethyltransferase from Cellvibrio japonicus (strain Ueda107) (Pseudomonas fluorescens subsp. cellulosa).